The primary structure comprises 553 residues: Peroxiredoxin-2A (553 aa).

The region spanning 4–160 (IDVGDFVPDG…LMKMTTTTMS (157 aa)) is the Thioredoxin domain. Cys51 functions as the Cysteine sulfenic acid (-SOH) intermediate in the catalytic mechanism. The F-box domain occupies 156 to 201 (TTTMSNLPTDLLEEIISRVPRKYMRAVRLTCKRWNGMFKSQSFTKM).

This sequence belongs to the peroxiredoxin family. Prx5 subfamily. As to quaternary structure, monomer.

It carries out the reaction [glutaredoxin]-dithiol + a hydroperoxide = [glutaredoxin]-disulfide + an alcohol + H2O. In terms of biological role, thiol-specific peroxidase that catalyzes the reduction of hydrogen peroxide and organic hydroperoxides to water and alcohols, respectively. Plays a role in cell protection against oxidative stress by detoxifying peroxides. May be involved in intracellular redox signaling. The polypeptide is Peroxiredoxin-2A (PRXIIA) (Arabidopsis thaliana (Mouse-ear cress)).